The primary structure comprises 260 residues: Glucosamine-6-phosphate deaminase (260 aa).

Residue Asp-67 is the Proton acceptor; for enolization step of the active site. The active-site For ring-opening step is the Asp-136. His-138 serves as the catalytic Proton acceptor; for ring-opening step. Glu-143 acts as the For ring-opening step in catalysis.

The protein belongs to the glucosamine/galactosamine-6-phosphate isomerase family. NagB subfamily.

The catalysed reaction is alpha-D-glucosamine 6-phosphate + H2O = beta-D-fructose 6-phosphate + NH4(+). It participates in amino-sugar metabolism; N-acetylneuraminate degradation; D-fructose 6-phosphate from N-acetylneuraminate: step 5/5. In terms of biological role, catalyzes the reversible isomerization-deamination of glucosamine 6-phosphate (GlcN6P) to form fructose 6-phosphate (Fru6P) and ammonium ion. In Arthrobacter sp. (strain FB24), this protein is Glucosamine-6-phosphate deaminase.